Consider the following 635-residue polypeptide: Sodium- and chloride-dependent creatine transporter 1 (635 aa).

Residues 1–27 (MAKKSAENGIYSVSGDEKKGPLIVSGP) are disordered. Over 1-60 (MAKKSAENGIYSVSGDEKKGPLIVSGPDGAPAKGDGPAGLGAPGGRLAVPPRETWTRQMD) the chain is Cytoplasmic. The chain crosses the membrane as a helical span at residues 61 to 81 (FIMSCVGFAVGLGNVWRFPYL). At 82–87 (CYKNGG) the chain is on the extracellular side. A helical membrane pass occupies residues 88-108 (GVFLIPYVLIALVGGIPIFFL). Residues 109-138 (EISLGQFMKAGSINVWNICPLFKGLGYASM) lie on the Cytoplasmic side of the membrane. A helical transmembrane segment spans residues 139–159 (VIVFYCNTYYIMVLAWGFYYL). Topologically, residues 160-230 (VKSFTTTLPW…LSTGLEVPGA (71 aa)) are extracellular. 2 N-linked (GlcNAc...) asparagine glycosylation sites follow: Asn192 and Asn197. Residues 231-251 (LNWEVTLCLLACWVLVYFCVW) form a helical membrane-spanning segment. Topologically, residues 252–269 (KGVKSTGKIVYFTATFPY) are cytoplasmic. A helical membrane pass occupies residues 270-290 (VVLVVLLVRGVLLPGALDGII). Topologically, residues 291–304 (YYLKPDWSKLGSPQ) are extracellular. A helical transmembrane segment spans residues 305–325 (VWIDAGTQIFFSYAIGLGALT). Over 326-341 (ALGSYNRFNNNCYKDA) the chain is Cytoplasmic. A helical membrane pass occupies residues 342-362 (IILALINSGTSFFAGFVVFSI). Residues 363-394 (LGFMATEQGVHISKVAESGPGLAFIAYPRAVT) lie on the Extracellular side of the membrane. Residues 395 to 415 (LMPVAPLWAALFFFMLLLLGL) traverse the membrane as a helical segment. Residues 416–444 (DSQFVGVEGFITGLLDLLPASYYFRFQRE) are Cytoplasmic-facing. Residues 445-465 (ISVALCCALCFVIDLSMVTDG) traverse the membrane as a helical segment. Residues 466–479 (GMYVFQLFDYYSAS) are Extracellular-facing. Residues 480–500 (GTTLLWQAFWECVVVAWVYGA) traverse the membrane as a helical segment. Over 501–520 (DRFMDDIACMIGYRPCPWMK) the chain is Cytoplasmic. The chain crosses the membrane as a helical span at residues 521 to 541 (WCWSFFTPLVCMGIFIFNIVY). At 542–560 (YEPLVYNNTYVYPWWGEAM) the chain is on the extracellular side. N-linked (GlcNAc...) asparagine glycosylation occurs at Asn548. Residues 561-581 (GWAFALSSMLCVPLHLLGCLL) form a helical membrane-spanning segment. Residues 582–635 (RAKGTMAERWQHLTQPIWGLHHLEYRAQDADVRGLTTLTPVSESSKVVVVESVM) are Cytoplasmic-facing. Phosphothreonine occurs at positions 617 and 620. Ser623 carries the phosphoserine modification.

It belongs to the sodium:neurotransmitter symporter (SNF) (TC 2.A.22) family. SLC6A8 subfamily. In terms of processing, glycosylated. As to expression, brain. Highly expressed in brain capillaries branching in all cortical layers and moderately expressed in neuronal perikarya (at protein level).

It is found in the cell membrane. Its subcellular location is the apical cell membrane. It catalyses the reaction creatine(out) + chloride(out) + 2 Na(+)(out) = creatine(in) + chloride(in) + 2 Na(+)(in). Functionally, creatine:sodium symporter which mediates the uptake of creatine. Plays an important role in supplying creatine to the brain via the blood-brain barrier. The sequence is that of Sodium- and chloride-dependent creatine transporter 1 (Slc6a8) from Mus musculus (Mouse).